The chain runs to 99 residues: Aspartyl/glutamyl-tRNA(Asn/Gln) amidotransferase subunit C (99 aa).

Belongs to the GatC family. In terms of assembly, heterotrimer of A, B and C subunits.

The enzyme catalyses L-glutamyl-tRNA(Gln) + L-glutamine + ATP + H2O = L-glutaminyl-tRNA(Gln) + L-glutamate + ADP + phosphate + H(+). It carries out the reaction L-aspartyl-tRNA(Asn) + L-glutamine + ATP + H2O = L-asparaginyl-tRNA(Asn) + L-glutamate + ADP + phosphate + 2 H(+). Allows the formation of correctly charged Asn-tRNA(Asn) or Gln-tRNA(Gln) through the transamidation of misacylated Asp-tRNA(Asn) or Glu-tRNA(Gln) in organisms which lack either or both of asparaginyl-tRNA or glutaminyl-tRNA synthetases. The reaction takes place in the presence of glutamine and ATP through an activated phospho-Asp-tRNA(Asn) or phospho-Glu-tRNA(Gln). The sequence is that of Aspartyl/glutamyl-tRNA(Asn/Gln) amidotransferase subunit C from Kineococcus radiotolerans (strain ATCC BAA-149 / DSM 14245 / SRS30216).